We begin with the raw amino-acid sequence, 388 residues long: Succinate--CoA ligase [ADP-forming] subunit beta (388 aa).

One can recognise an ATP-grasp domain in the interval 9–244; sequence KQLFAEFGLP…PSQEDEREAH (236 aa). Residues Lys46, 53 to 55, Glu99, Ser102, and Glu107 each bind ATP; that span reads GRG. Residues Asn199 and Asp213 each coordinate Mg(2+). Substrate-binding positions include Asn264 and 321–323; that span reads GIV.

The protein belongs to the succinate/malate CoA ligase beta subunit family. As to quaternary structure, heterotetramer of two alpha and two beta subunits. The cofactor is Mg(2+).

It carries out the reaction succinate + ATP + CoA = succinyl-CoA + ADP + phosphate. The enzyme catalyses GTP + succinate + CoA = succinyl-CoA + GDP + phosphate. It functions in the pathway carbohydrate metabolism; tricarboxylic acid cycle; succinate from succinyl-CoA (ligase route): step 1/1. In terms of biological role, succinyl-CoA synthetase functions in the citric acid cycle (TCA), coupling the hydrolysis of succinyl-CoA to the synthesis of either ATP or GTP and thus represents the only step of substrate-level phosphorylation in the TCA. The beta subunit provides nucleotide specificity of the enzyme and binds the substrate succinate, while the binding sites for coenzyme A and phosphate are found in the alpha subunit. The chain is Succinate--CoA ligase [ADP-forming] subunit beta from Vibrio atlanticus (strain LGP32) (Vibrio splendidus (strain Mel32)).